Consider the following 634-residue polypeptide: Nicotinic receptor-associated protein 1 (634 aa).

2 C2 domains span residues 1 to 141 and 159 to 295; these read MNQP…KAHL and KTGS…EILL. Residues leucine 29, aspartate 30, aspartate 36, aspartate 105, aspartate 107, aspartate 119, aspartate 189, aspartate 195, aspartate 251, aspartate 253, and aspartate 271 each coordinate Ca(2+). Residues 338-557 form the VWFA domain; it reads DFAVAVDFTA…LDPDVIQENL (220 aa). The tract at residues 576–603 is disordered; it reads RGFQPRPVDDPWRRDSPPPEFDPILDGT. Positions 582-592 are enriched in basic and acidic residues; the sequence is PVDDPWRRDSP.

The protein belongs to the copine family. In terms of assembly, interacts with nicotinic acetylcholine receptor. Ca(2+) is required as a cofactor. In terms of tissue distribution, expressed in head and tail neurons, ventral cord moto-neurons, body wall muscles and hypodermal cells of the vulva.

Its subcellular location is the cell membrane. Functionally, exhibits calcium-dependent phospholipid binding properties. May function in membrane trafficking. Regulates synaptic levels of nicotinic acetylcholine receptor subunit lev-1 and unc-38 in the nerve cord. Involved in nicotinic acetylcholine receptor (nAChR)-mediated sensitivity to nicotine and levamisole. Affects directional sperm motility. The sequence is that of Nicotinic receptor-associated protein 1 (nra-1) from Caenorhabditis elegans.